The following is a 188-amino-acid chain: Scytalone dehydratase (188 aa).

The substrate site is built by Tyr-27, Tyr-47, and Phe-50. Residues His-82 and His-107 contribute to the active site. Asn-128 is a substrate binding site.

This sequence belongs to the scytalone dehydratase family. As to quaternary structure, homotrimer. Each subunit contains an active site, located in the central part of the hydrophobic core of the monomer, which functions independently.

The protein localises to the endosome. The enzyme catalyses scytalone = 1,3,8-trihydroxynaphthalene + H2O. It functions in the pathway pigment biosynthesis; melanin biosynthesis. Its activity is regulated as follows. Carpropamid acts as an efficient inhibitor of scytalone dehydratase activity. Scytalone dehydratase; part of the gene cluster that mediates the biosynthesis of dihydroxynaphthalene (DHN)-melanin, a bluish-green pigment and a structural component of the conidial wall. Within the pathway, catalyzes the dehydration of scytalone as well as of vermelone. The chain is Scytalone dehydratase from Colletotrichum orbiculare (strain 104-T / ATCC 96160 / CBS 514.97 / LARS 414 / MAFF 240422) (Cucumber anthracnose fungus).